The following is an 88-amino-acid chain: U-scoloptoxin(01)-Tl1a (88 aa).

The N-terminal stretch at 1–16 (MSVYGLLSLLIFIVLA) is a signal peptide. A Chitin-binding type-2 domain is found at 25 to 81 (GKDCSEKEEYLYDSSNCDIFYECDESLKPQRMMCGPGTGWNQDKLVCDFLTNIDCTR). An intrachain disulfide couples C58 to C71.

This sequence belongs to the scoloptoxin-01 family. Contains 3 disulfide bonds. As to expression, expressed by the venom gland.

Its subcellular location is the secreted. The polypeptide is U-scoloptoxin(01)-Tl1a (Thereuopoda longicornis (Long-legged centipede)).